We begin with the raw amino-acid sequence, 146 residues long: Acidic phospholipase A2 S8-51 (146 aa).

A signal peptide spans 1–19 (MYPAHLLVLLAVCVSLLGA). Positions 20–27 (ASIPPQPL) are excised as a propeptide. 7 disulfides stabilise this stretch: Cys-38-Cys-98, Cys-54-Cys-145, Cys-56-Cys-72, Cys-71-Cys-126, Cys-78-Cys-119, Cys-87-Cys-112, and Cys-105-Cys-117. Residues Tyr-55, Gly-57, and Gly-59 each contribute to the Ca(2+) site. The active site involves His-75. Asp-76 is a binding site for Ca(2+). Residue Asp-120 is part of the active site.

The protein belongs to the phospholipase A2 family. Group I subfamily. D49 sub-subfamily. Requires Ca(2+) as cofactor. Expressed by the venom gland.

It localises to the secreted. The catalysed reaction is a 1,2-diacyl-sn-glycero-3-phosphocholine + H2O = a 1-acyl-sn-glycero-3-phosphocholine + a fatty acid + H(+). Functionally, snake venom phospholipase A2 (PLA2) that inhibits collagen-induced platelet aggregation. PLA2 catalyzes the calcium-dependent hydrolysis of the 2-acyl groups in 3-sn-phosphoglycerides. In Austrelaps superbus (Lowland copperhead snake), this protein is Acidic phospholipase A2 S8-51.